The primary structure comprises 344 residues: Anthranilate phosphoribosyltransferase (344 aa).

5-phospho-alpha-D-ribose 1-diphosphate-binding positions include glycine 86, 89–90 (GD), threonine 94, 96–99 (NIST), 114–122 (KHGNKSASG), and serine 126. An anthranilate-binding site is contributed by glycine 86. Serine 98 contacts Mg(2+). Residue asparagine 117 coordinates anthranilate. Residue arginine 172 coordinates anthranilate. Mg(2+)-binding residues include aspartate 231 and glutamate 232.

It belongs to the anthranilate phosphoribosyltransferase family. As to quaternary structure, homodimer. Mg(2+) serves as cofactor.

The enzyme catalyses N-(5-phospho-beta-D-ribosyl)anthranilate + diphosphate = 5-phospho-alpha-D-ribose 1-diphosphate + anthranilate. The protein operates within amino-acid biosynthesis; L-tryptophan biosynthesis; L-tryptophan from chorismate: step 2/5. Its function is as follows. Catalyzes the transfer of the phosphoribosyl group of 5-phosphorylribose-1-pyrophosphate (PRPP) to anthranilate to yield N-(5'-phosphoribosyl)-anthranilate (PRA). This Prochlorococcus marinus (strain AS9601) protein is Anthranilate phosphoribosyltransferase.